The primary structure comprises 148 residues: Endoribonuclease YbeY (148 aa).

Positions 113, 117, and 123 each coordinate Zn(2+).

Belongs to the endoribonuclease YbeY family. It depends on Zn(2+) as a cofactor.

The protein resides in the cytoplasm. In terms of biological role, single strand-specific metallo-endoribonuclease involved in late-stage 70S ribosome quality control and in maturation of the 3' terminus of the 16S rRNA. The sequence is that of Endoribonuclease YbeY from Borrelia hermsii (strain HS1 / DAH).